Here is a 436-residue protein sequence, read N- to C-terminus: Adenylosuccinate synthetase (436 aa).

GTP-binding positions include 22-28 (GDEGKGK) and 50-52 (GHE). The Proton acceptor role is filled by Asp23. Mg(2+) contacts are provided by Asp23 and Gly50. IMP contacts are provided by residues 23-26 (DEGK), 48-51 (NAGH), Thr141, Arg155, Asn231, Thr246, and Arg310. The active-site Proton donor is the His51. Substrate is bound at residue 306–312 (VSTARVR). Residues Arg312, 338–340 (KMD), and 424–426 (GVG) each bind GTP.

Belongs to the adenylosuccinate synthetase family. In terms of assembly, homodimer. The cofactor is Mg(2+).

The protein resides in the cytoplasm. It catalyses the reaction IMP + L-aspartate + GTP = N(6)-(1,2-dicarboxyethyl)-AMP + GDP + phosphate + 2 H(+). The protein operates within purine metabolism; AMP biosynthesis via de novo pathway; AMP from IMP: step 1/2. In terms of biological role, plays an important role in the salvage pathway for purine nucleotide biosynthesis. Catalyzes the first committed step in the biosynthesis of AMP from IMP. The chain is Adenylosuccinate synthetase from Babesia bovis.